The following is a 457-amino-acid chain: Glutamate--tRNA ligase 2 (457 aa).

The 'HIGH' region signature appears at 9-19 (PSPTGRIHIGN). The 'KMSKS' region signature appears at 250-254 (GLSKR). Position 253 (K253) interacts with ATP.

Belongs to the class-I aminoacyl-tRNA synthetase family. Glutamate--tRNA ligase type 1 subfamily. As to quaternary structure, monomer.

It localises to the cytoplasm. It carries out the reaction tRNA(Glu) + L-glutamate + ATP = L-glutamyl-tRNA(Glu) + AMP + diphosphate. Functionally, catalyzes the attachment of glutamate to tRNA(Glu) in a two-step reaction: glutamate is first activated by ATP to form Glu-AMP and then transferred to the acceptor end of tRNA(Glu). The polypeptide is Glutamate--tRNA ligase 2 (Mesorhizobium japonicum (strain LMG 29417 / CECT 9101 / MAFF 303099) (Mesorhizobium loti (strain MAFF 303099))).